A 213-amino-acid polypeptide reads, in one-letter code: 3-demethoxyubiquinol 3-hydroxylase (213 aa).

Fe cation-binding residues include Glu-62, Glu-92, His-95, Glu-144, Glu-176, and His-179.

The protein belongs to the COQ7 family. Requires Fe cation as cofactor.

It is found in the cell membrane. It carries out the reaction a 5-methoxy-2-methyl-3-(all-trans-polyprenyl)benzene-1,4-diol + AH2 + O2 = a 3-demethylubiquinol + A + H2O. The protein operates within cofactor biosynthesis; ubiquinone biosynthesis. Functionally, catalyzes the hydroxylation of 2-nonaprenyl-3-methyl-6-methoxy-1,4-benzoquinol during ubiquinone biosynthesis. The protein is 3-demethoxyubiquinol 3-hydroxylase of Legionella pneumophila (strain Corby).